Here is a 194-residue protein sequence, read N- to C-terminus: Threonylcarbamoyl-AMP synthase (194 aa).

The region spanning 11 to 194 (FRNLMKIINA…GINYKIIRKG (184 aa)) is the YrdC-like domain.

The protein belongs to the SUA5 family. TsaC subfamily.

It is found in the cytoplasm. The enzyme catalyses L-threonine + hydrogencarbonate + ATP = L-threonylcarbamoyladenylate + diphosphate + H2O. In terms of biological role, required for the formation of a threonylcarbamoyl group on adenosine at position 37 (t(6)A37) in tRNAs that read codons beginning with adenine. Catalyzes the conversion of L-threonine, HCO(3)(-)/CO(2) and ATP to give threonylcarbamoyl-AMP (TC-AMP) as the acyladenylate intermediate, with the release of diphosphate. This Wigglesworthia glossinidia brevipalpis protein is Threonylcarbamoyl-AMP synthase.